The chain runs to 32 residues: Dermatoxin-J3 (32 aa).

Residue Gln-32 is modified to Glutamine amide.

As to expression, expressed by the skin glands.

Its subcellular location is the secreted. In terms of biological role, antimicrobial peptide. The sequence is that of Dermatoxin-J3 from Phasmahyla jandaia (Jandaia leaf frog).